Consider the following 262-residue polypeptide: Putative hydro-lyase Mflv_5194 (262 aa).

Belongs to the D-glutamate cyclase family.

This is Putative hydro-lyase Mflv_5194 from Mycolicibacterium gilvum (strain PYR-GCK) (Mycobacterium gilvum (strain PYR-GCK)).